We begin with the raw amino-acid sequence, 251 residues long: Hydroxyacylglutathione hydrolase (251 aa).

Zn(2+) is bound by residues histidine 53, histidine 55, aspartate 57, histidine 58, histidine 110, aspartate 127, and histidine 165.

The protein belongs to the metallo-beta-lactamase superfamily. Glyoxalase II family. As to quaternary structure, monomer. Zn(2+) is required as a cofactor.

The enzyme catalyses an S-(2-hydroxyacyl)glutathione + H2O = a 2-hydroxy carboxylate + glutathione + H(+). It functions in the pathway secondary metabolite metabolism; methylglyoxal degradation; (R)-lactate from methylglyoxal: step 2/2. Thiolesterase that catalyzes the hydrolysis of S-D-lactoyl-glutathione to form glutathione and D-lactic acid. The sequence is that of Hydroxyacylglutathione hydrolase from Escherichia coli O6:H1 (strain CFT073 / ATCC 700928 / UPEC).